Here is a 351-residue protein sequence, read N- to C-terminus: NAD-dependent protein deacetylase SIR2rp1 (351 aa).

Residues 10-325 (HVVGEPTFEG…RSFAQALGFG (316 aa)) enclose the Deacetylase sirtuin-type domain. Residues 37–57 (GAGISVAAGIPDFRSPHTGLY) and 122–125 (QNID) each bind NAD(+). His-142 (proton acceptor) is an active-site residue. The Zn(2+) site is built by Cys-150, Cys-153, Cys-174, and Cys-177. NAD(+) contacts are provided by residues 213 to 215 (GTS) and 238 to 240 (NLE). Residues 260–284 (SSYRLSTGNGNGSKISSGDSSNSSS) are disordered. Positions 265-284 (STGNGNGSKISSGDSSNSSS) are enriched in low complexity. Cys-311 contacts NAD(+).

Belongs to the sirtuin family. Class I subfamily. The cofactor is Zn(2+).

It localises to the nucleus. The protein localises to the chromosome. The protein resides in the telomere. It catalyses the reaction N(6)-acetyl-L-lysyl-[protein] + NAD(+) + H2O = 2''-O-acetyl-ADP-D-ribose + nicotinamide + L-lysyl-[protein]. NAD-dependent protein deacetylase, which is involved in repression of RNA polymerase I-mediated expression immediately adjacent to telomeres. It is however not involved in antigenic variation and subtelomeric variant surface glycoprotein (VSG) gene silencing. Plays a role in DNA damage response. Also has ADP-ribosylation activity in vitro. The sequence is that of NAD-dependent protein deacetylase SIR2rp1 (SIR2rp1) from Trypanosoma brucei brucei (strain 927/4 GUTat10.1).